The following is a 252-amino-acid chain: Trans-aconitate 2-methyltransferase (252 aa).

The protein belongs to the methyltransferase superfamily. Tam family.

It localises to the cytoplasm. It catalyses the reaction trans-aconitate + S-adenosyl-L-methionine = (E)-3-(methoxycarbonyl)pent-2-enedioate + S-adenosyl-L-homocysteine. Catalyzes the S-adenosylmethionine monomethyl esterification of trans-aconitate. The polypeptide is Trans-aconitate 2-methyltransferase (Escherichia coli (strain ATCC 8739 / DSM 1576 / NBRC 3972 / NCIMB 8545 / WDCM 00012 / Crooks)).